Reading from the N-terminus, the 517-residue chain is 2-isopropylmalate synthase (517 aa).

The Pyruvate carboxyltransferase domain maps to 5–268 (IIIFDTTLRD…DTRINTQEIH (264 aa)). Mn(2+) contacts are provided by D14, H202, H204, and N238. Residues 393–517 (SLDVITSQTI…ADLKSHKISQ (125 aa)) are regulatory domain.

Belongs to the alpha-IPM synthase/homocitrate synthase family. LeuA type 1 subfamily. In terms of assembly, homodimer. Mn(2+) is required as a cofactor.

It is found in the cytoplasm. It carries out the reaction 3-methyl-2-oxobutanoate + acetyl-CoA + H2O = (2S)-2-isopropylmalate + CoA + H(+). Its pathway is amino-acid biosynthesis; L-leucine biosynthesis; L-leucine from 3-methyl-2-oxobutanoate: step 1/4. In terms of biological role, catalyzes the condensation of the acetyl group of acetyl-CoA with 3-methyl-2-oxobutanoate (2-ketoisovalerate) to form 3-carboxy-3-hydroxy-4-methylpentanoate (2-isopropylmalate). The sequence is that of 2-isopropylmalate synthase from Histophilus somni (strain 129Pt) (Haemophilus somnus).